The sequence spans 541 residues: Arginine-containing cyclodipeptide synthase avaA (541 aa).

Positions 428–432 match the Conserved DDXXE motif motif; that stretch reads DDIAE.

The protein belongs to the arginine-containing cyclodipeptide synthase family.

The enzyme catalyses L-tryptophyl-tRNA(Trp) + L-arginyl-tRNA(Arg) = cyclo(L-arginyl-L-tryptophyl) + tRNA(Trp) + tRNA(Arg) + H(+). The protein operates within secondary metabolite biosynthesis. Functionally, arginine-containing cyclodipeptide synthase; part of the cluster that mediates the biosynthesis of a highly modified cyclo-arginine-tryptophan dipeptide (cRW). Within the pathway, avaA acts as the scaffold-generating enzyme and is responsible for formation of the cyclo-Arg-Trp diketopiperazine (cRW) from L-arginyl-tRNA(Arg) + L-tryptophanyl-tRNA(Trp). AvaB then acts as a multifunctional flavoenzyme that is responsible for generating the cyclo-Arg-formylkynurenine DKP, which can be deformylated by avaC. AvaB then catalyzes an additional N-oxidation followed by cyclization and dehydration. The next step is an N-acetylation of the guanidine group catalyzed by the arginine N-acetyltransferase AvaD. The role of the additional enzymes identified within the ava cluster still have to be determined. The chain is Arginine-containing cyclodipeptide synthase avaA from Aspergillus versicolor.